We begin with the raw amino-acid sequence, 277 residues long: Small ribosomal subunit protein mS23 (277 aa).

Disordered regions lie at residues 48-85 and 232-277; these read APSH…KKPS and LAAF…GPPI. The segment covering 244–269 has biased composition (acidic residues); that stretch reads ESGESEDEIPLIEEEDAIGASEESET.

The protein belongs to the mitochondrion-specific ribosomal protein mS23 family. In terms of assembly, component of the mitochondrial small ribosomal subunit.

It is found in the mitochondrion. This is Small ribosomal subunit protein mS23 (RSM25) from Ajellomyces capsulatus (strain NAm1 / WU24) (Darling's disease fungus).